The primary structure comprises 347 residues: NADH-ubiquinone oxidoreductase chain 2 (347 aa).

11 helical membrane-spanning segments follow: residues 3 to 23, 25 to 45, 59 to 79, 96 to 116, 127 to 147, 149 to 169, 178 to 198, 201 to 221, 239 to 259, 274 to 294, and 326 to 346; these read PMTF…VLLS, HWFM…PVLM, YFLT…INTM, ILIT…FWVP, GLIL…QIYP, LNTN…GWGG, IMAY…TYNP, SLLN…LLII, IVTT…PLTG, NSLI…FFYM, and TAPL…LITL.

Belongs to the complex I subunit 2 family. Core subunit of respiratory chain NADH dehydrogenase (Complex I) which is composed of 45 different subunits. Interacts with TMEM242.

It is found in the mitochondrion inner membrane. The catalysed reaction is a ubiquinone + NADH + 5 H(+)(in) = a ubiquinol + NAD(+) + 4 H(+)(out). Core subunit of the mitochondrial membrane respiratory chain NADH dehydrogenase (Complex I) which catalyzes electron transfer from NADH through the respiratory chain, using ubiquinone as an electron acceptor. Essential for the catalytic activity and assembly of complex I. The sequence is that of NADH-ubiquinone oxidoreductase chain 2 from Sylvisorex ollula (Greater forest shrew).